We begin with the raw amino-acid sequence, 382 residues long: MLDGLKMEENFQSAIDTSASFSSLLGRAVSPKSVCEGCQRVILDRFLLRLNDSFWHEQCVQCASCKEPLETTCFYRDKKLYCKYDYEKLFAVKCGGCFEAIAPNEFVMRAQKSVYHLSCFCCCVCERQLQKGDEFVLKEGQLLCKGDYEKERELLSLVSPAASDSGKSDDEESLCKSAHGAGKGTAEEGKDHKRPKRPRTILTTQQRRAFKASFEVSSKPCRKVRETLAAETGLSVRVVQVWFQNQRAKMKKLARRQQQQQQDQQNTQRLSSAQTNGGGSAGMEGIMNPYTALPTPQQLLAIEQSVYSSDPFRQGLTPPQMPGDHMHPYGAEPLFHDLDSDDTSLSNLGDCFLATSEAGPLQSRVGNPIDHLYSMQNSYFTS.

LIM zinc-binding domains follow at residues 33–92 (SVCE…LFAV) and 92–154 (VKCG…EREL). Disordered stretches follow at residues 161–208 (AASD…QQRR) and 252–285 (KLAR…GMEG). Positions 195 to 254 (PKRPRTILTTQQRRAFKASFEVSSKPCRKVRETLAAETGLSVRVVQVWFQNQRAKMKKLA) form a DNA-binding region, homeobox. Residues 256-269 (RQQQQQQDQQNTQR) show a composition bias toward low complexity.

Isoform 1 is expressed in many tissues. Not found in heart, liver, spleen and testis. Relatively highly expressed in fetal brain. Isoform LMX1A-4AB is expressed in testis.

The protein localises to the nucleus. Acts as a transcriptional activator by binding to an A/T-rich sequence, the FLAT element, in the insulin gene promoter. Required for development of the roof plate and, in turn, for specification of dorsal cell fates in the CNS and developing vertebrae. The sequence is that of LIM homeobox transcription factor 1-alpha (LMX1A) from Homo sapiens (Human).